Here is a 587-residue protein sequence, read N- to C-terminus: Polyadenylate-binding protein-interacting protein 3 (587 aa).

A Sm domain is found at 51-132 (LLVYFTTCNI…LVQVIAKDLP (82 aa)). The interval 422–503 (AKSENSSGWP…QSPQSPVFDG (82 aa)) is disordered. Over residues 431 to 464 (PGSSISRNSENSAASSASNLPILSPSSSGSLSSE) the composition is skewed to low complexity. The PAM2-like 1; degenerate motif lies at 467–475 (TLNPNAKEF). Positions 476 to 486 (KLNPNAKSFKP) match the PAM2-like 2 motif. Polar residues predominate over residues 486 to 498 (PSPSATRPQSPQS).

In Arabidopsis thaliana (Mouse-ear cress), this protein is Polyadenylate-binding protein-interacting protein 3 (CID3).